A 334-amino-acid polypeptide reads, in one-letter code: Phospho-N-acetylmuramoyl-pentapeptide-transferase (334 aa).

The next 9 membrane-spanning stretches (helical) occupy residues 5–25, 52–72, 81–101, 116–136, 148–168, 181–200, 230–250, 256–276, and 309–329; these read VVWLAAGISFLVTLVLGPVTI, PTMGGIMFLIGIAVAGAVLLV, GLVVLAVTLGYGLIGFLDDFI, KILGQLVFATVLAVVAVFKLG, GISFDLGWWPFFFLTLFVLLG, GLASGATVFTATAFAILALV, VFMGDTGSLALGGALGAGAVV, LLVVIGGLYVLETLSVIIQVI, and FWLLSFLFSLVGLLGAQDFWL.

It belongs to the glycosyltransferase 4 family. MraY subfamily. Mg(2+) serves as cofactor.

The protein resides in the cell membrane. The catalysed reaction is UDP-N-acetyl-alpha-D-muramoyl-L-alanyl-gamma-D-glutamyl-meso-2,6-diaminopimeloyl-D-alanyl-D-alanine + di-trans,octa-cis-undecaprenyl phosphate = di-trans,octa-cis-undecaprenyl diphospho-N-acetyl-alpha-D-muramoyl-L-alanyl-D-glutamyl-meso-2,6-diaminopimeloyl-D-alanyl-D-alanine + UMP. Its pathway is cell wall biogenesis; peptidoglycan biosynthesis. Its function is as follows. Catalyzes the initial step of the lipid cycle reactions in the biosynthesis of the cell wall peptidoglycan: transfers peptidoglycan precursor phospho-MurNAc-pentapeptide from UDP-MurNAc-pentapeptide onto the lipid carrier undecaprenyl phosphate, yielding undecaprenyl-pyrophosphoryl-MurNAc-pentapeptide, known as lipid I. The chain is Phospho-N-acetylmuramoyl-pentapeptide-transferase from Desulforamulus reducens (strain ATCC BAA-1160 / DSM 100696 / MI-1) (Desulfotomaculum reducens).